Consider the following 175-residue polypeptide: Alpha-crystallin B chain (175 aa).

The residue at position 1 (Met1) is an N-acetylmethionine. Residues Ser19, Ser45, and Ser59 each carry the phosphoserine modification. A sHSP domain is found at 56–164 (RAPSWIDTGL…PERTIPITRE (109 aa)). A Zn(2+)-binding site is contributed by His83. Lys92 bears the N6-acetyllysine mark. Zn(2+) is bound by residues His104, Glu106, His111, and His119. The interval 145–175 (VNGPRKQASGPERTIPITREEKPAVTAAPKK) is disordered. Lys166 bears the N6-acetyllysine mark. O-linked (GlcNAc) threonine glycosylation occurs at Thr170.

It belongs to the small heat shock protein (HSP20) family. Heteromer composed of three CRYAA and one CRYAB subunits. Aggregates with homologous proteins, including the small heat shock protein HSPB1, to form large heteromeric complexes. Inter-subunit bridging via zinc ions enhances stability, which is crucial as there is no protein turn over in the lens. Interacts with HSPBAP1 and TTN/titin. Interacts with TMEM109; in the cellular response to DNA damage. Interacts with DES; binds rapidly during early stages of DES filament assembly and a reduced binding seen in the later stages. Interacts with TMED10; the interaction mediates the translocation from the cytoplasm into the ERGIC (endoplasmic reticulum-Golgi intermediate compartment) and thereby secretion. Interacts with ATP6V1A and with MTOR, forming a ternary complex. Lens as well as other tissues.

The protein localises to the cytoplasm. Its subcellular location is the nucleus. The protein resides in the secreted. It localises to the lysosome. Its function is as follows. May contribute to the transparency and refractive index of the lens. Has chaperone-like activity, preventing aggregation of various proteins under a wide range of stress conditions. In lens epithelial cells, stabilizes the ATP6V1A protein, preventing its degradation by the proteasome. The protein is Alpha-crystallin B chain (CRYAB) of Mesocricetus auratus (Golden hamster).